The chain runs to 109 residues: Spermidine export protein MdtI (109 aa).

4 helical membrane passes run 6–26 (WIHA…NVFL), 36–56 (WFGL…SQAV), 64–84 (AYAL…WVLF), and 88–108 (LNRK…MIKL).

The protein belongs to the drug/metabolite transporter (DMT) superfamily. Small multidrug resistance (SMR) (TC 2.A.7.1) family. MdtI subfamily. Forms a complex with MdtJ.

It is found in the cell inner membrane. Catalyzes the excretion of spermidine. This chain is Spermidine export protein MdtI, found in Enterobacter sp. (strain 638).